A 408-amino-acid chain; its full sequence is Probable ethanolamine permease EutH (408 aa).

The next 11 helical transmembrane spans lie at 1–21, 61–81, 89–109, 126–146, 155–175, 192–212, 230–250, 274–294, 313–333, 342–362, and 369–389; these read MGIN…AAVD, AMVG…PVII, ANPS…FFLA, ILGS…LGII, ALGV…GGLI, FALI…VALG, FLVA…LLGW, IEVI…VLLL, NIAA…FGMM, VINC…LGFA, and MIFP…GVAM.

This sequence belongs to the EutH family.

It localises to the cell inner membrane. It carries out the reaction ethanolamine(in) = ethanolamine(out). It functions in the pathway amine and polyamine degradation; ethanolamine degradation. Its function is as follows. Probably involved in the diffusion of protonated ethanolamine (EA) into the cell at low pH. At low pH most EA is protonated, and this permease becomes necessary. Contributes to bacterial survival and replication in acidified macrophage vacuoles, but not to bacterial uptake by macrophages. Functionally, expression of the eut operon allows this bacteria to use ethanolamine (EA) as a carbon, nitrogen and energy source. It relies on cobalamin (vitamin B12) both as a cofactor for the ethanolamine ammonia-lyase (EAL) activity and to induce the operon. EA enhances bacterial survival in macrophages in a concentration-dependent manner, suggesting it is an important nutrient during infection. The protein is Probable ethanolamine permease EutH of Salmonella typhimurium (strain LT2 / SGSC1412 / ATCC 700720).